Reading from the N-terminus, the 140-residue chain is Nucleoside diphosphate kinase (140 aa).

The ATP site is built by Lys11, Phe59, Arg87, Thr93, Arg104, and Asn114. Catalysis depends on His117, which acts as the Pros-phosphohistidine intermediate.

It belongs to the NDK family. As to quaternary structure, homotetramer. Mg(2+) serves as cofactor.

The protein resides in the cytoplasm. It catalyses the reaction a 2'-deoxyribonucleoside 5'-diphosphate + ATP = a 2'-deoxyribonucleoside 5'-triphosphate + ADP. The catalysed reaction is a ribonucleoside 5'-diphosphate + ATP = a ribonucleoside 5'-triphosphate + ADP. In terms of biological role, major role in the synthesis of nucleoside triphosphates other than ATP. The ATP gamma phosphate is transferred to the NDP beta phosphate via a ping-pong mechanism, using a phosphorylated active-site intermediate. This Sinorhizobium fredii (strain NBRC 101917 / NGR234) protein is Nucleoside diphosphate kinase.